We begin with the raw amino-acid sequence, 406 residues long: MTLDVGPEDELPDWAAAKEFYQKYDPKDVIGRGVSSVVRRCVHRATGHEFAVKIMEVTAERLSPEQLEEVREATRRETHILRQVAGHPHIITLIDSYESSSFMFLVFDLMRKGELFDYLTEKVALSEKETRSIMRSLLEAVSFLHANNIVHRDLKPENILLDDNMQIRLSDFGFSCHLEPGEKLRELCGTPGYLAPEILKCSMDETHPGYGKEVDLWACGVILFTLLAGSPPFWHRRQILMLRMIMEGQYQFSSPEWDDRSSTVKDLISRLLQVDPEARLTAEQALQHPFFERCEGSQPWNLTPRQRFRVAVWTVLAAGRVALSTHRVRPLTKNALLRDPYALRSVRHLIDNCAFRLYGHWVKKGEQQNRAALFQHRPPGPFPIMGPEEEGDSAAITEDEAVLVLG.

The Protein kinase domain occupies 24-291 (YDPKDVIGRG…AEQALQHPFF (268 aa)). ATP contacts are provided by residues 30–38 (IGRGVSSVV) and Lys-53. Residue Asp-153 is the Proton acceptor of the active site. The calmodulin-binding (domain-N) stretch occupies residues 306–330 (QRFRVAVWTVLAAGRVALSTHRVRP). Ser-345 bears the Phosphoserine mark. Residues 346–370 (VRHLIDNCAFRLYGHWVKKGEQQNR) form a calmodulin-binding (domain-C) region.

It belongs to the protein kinase superfamily. CAMK Ser/Thr protein kinase family. Hexadecamer of 4 heterotetramers, each composed of alpha, beta, gamma, and delta subunits. Alpha (PHKA1 or PHKA2) and beta (PHKB) are regulatory subunits, gamma (PHKG1 or PHKG2) is the catalytic subunit, and delta is calmodulin.

The catalysed reaction is 2 ATP + phosphorylase b = 2 ADP + phosphorylase a.. Catalytic subunit of the phosphorylase b kinase (PHK), which mediates the neural and hormonal regulation of glycogen breakdown (glycogenolysis) by phosphorylating and thereby activating glycogen phosphorylase. May regulate glycogeneolysis in the testis. In vitro, phosphorylates PYGM. In Homo sapiens (Human), this protein is Phosphorylase b kinase gamma catalytic chain, liver/testis isoform (PHKG2).